A 165-amino-acid polypeptide reads, in one-letter code: Large ribosomal subunit protein uL10 (165 aa).

The protein belongs to the universal ribosomal protein uL10 family. As to quaternary structure, part of the ribosomal stalk of the 50S ribosomal subunit. The N-terminus interacts with L11 and the large rRNA to form the base of the stalk. The C-terminus forms an elongated spine to which L12 dimers bind in a sequential fashion forming a multimeric L10(L12)X complex.

Functionally, forms part of the ribosomal stalk, playing a central role in the interaction of the ribosome with GTP-bound translation factors. In Citrobacter koseri (strain ATCC BAA-895 / CDC 4225-83 / SGSC4696), this protein is Large ribosomal subunit protein uL10.